The sequence spans 129 residues: D-ribose pyranase 1 (129 aa).

Catalysis depends on H20, which acts as the Proton donor. Substrate-binding positions include D28, H96, and 118–120; that span reads YSN.

The protein belongs to the RbsD / FucU family. RbsD subfamily. In terms of assembly, homodecamer.

Its subcellular location is the cytoplasm. It catalyses the reaction beta-D-ribopyranose = beta-D-ribofuranose. It functions in the pathway carbohydrate metabolism; D-ribose degradation; D-ribose 5-phosphate from beta-D-ribopyranose: step 1/2. Catalyzes the interconversion of beta-pyran and beta-furan forms of D-ribose. The protein is D-ribose pyranase 1 of Rubrobacter xylanophilus (strain DSM 9941 / JCM 11954 / NBRC 16129 / PRD-1).